The primary structure comprises 219 residues: Thymidylate kinase (219 aa).

An ATP-binding site is contributed by 9-16 (GIEGCGKT).

It belongs to the thymidylate kinase family.

The catalysed reaction is dTMP + ATP = dTDP + ADP. Functionally, phosphorylation of dTMP to form dTDP in both de novo and salvage pathways of dTTP synthesis. In Syntrophus aciditrophicus (strain SB), this protein is Thymidylate kinase.